Here is a 123-residue protein sequence, read N- to C-terminus: Histone H2B (123 aa).

The disordered stretch occupies residues 1–32 (MAPKAPGKGAKKAAKSKAPRAPGDRKRKRTRR). Positions 9 to 18 (GAKKAAKSKA) are enriched in basic residues. Ser-110 is a glycosylation site (O-linked (GlcNAc) serine). Residue Lys-118 forms a Glycyl lysine isopeptide (Lys-Gly) (interchain with G-Cter in ubiquitin) linkage.

This sequence belongs to the histone H2B family. In terms of assembly, the nucleosome is a histone octamer containing two molecules each of H2A, H2B, H3 and H4 assembled in one H3-H4 heterotetramer and two H2A-H2B heterodimers. The octamer wraps approximately 147 bp of DNA. Post-translationally, monoubiquitination of Lys-118 gives a specific tag for epigenetic transcriptional activation and is also prerequisite for histone H3 'Lys-4' and 'Lys-79' methylation. GlcNAcylation at Ser-110 promotes monoubiquitination of Lys-118. It fluctuates in response to extracellular glucose, and associates with transcribed genes.

Its subcellular location is the nucleus. The protein localises to the chromosome. In terms of biological role, core component of nucleosome. Nucleosomes wrap and compact DNA into chromatin, limiting DNA accessibility to the cellular machineries which require DNA as a template. Histones thereby play a central role in transcription regulation, DNA repair, DNA replication and chromosomal stability. DNA accessibility is regulated via a complex set of post-translational modifications of histones, also called histone code, and nucleosome remodeling. The sequence is that of Histone H2B from Holothuria tubulosa (Tubular sea cucumber).